Here is a 524-residue protein sequence, read N- to C-terminus: Metalloendopeptidase OMA1, mitochondrial (524 aa).

Residues 1–13 (MSFICGLQSAARN) constitute a mitochondrion transit peptide. Positions 14-143 (HVFFRFNSLS…RNFHTSPRFQ (130 aa)) are excised as a propeptide. At 144 to 195 (AAPVPLLLMILKPVQKLFAIIVGRGIRKWWQALPPNKKEVVKENIRKNKWKL) the chain is on the mitochondrial matrix side. A cardiolipin-binding region spans residues 148–167 (PLLLMILKPVQKLFAIIVGR). The tract at residues 165 to 195 (VGRGIRKWWQALPPNKKEVVKENIRKNKWKL) is stress-sensor region. The helical transmembrane segment at 196 to 216 (FLGLSSFGLLFVVFYFTHLEV) threads the bilayer. Histidine 327 is a Zn(2+) binding site. Glutamate 328 is an active-site residue. 2 residues coordinate Zn(2+): histidine 331 and glutamate 392. The cysteines at positions 407 and 465 are disulfide-linked.

The protein belongs to the peptidase M48 family. In terms of assembly, homooligomer. Requires Zn(2+) as cofactor. In terms of processing, may form a redox-dependent disulfide bond. Exists in a semi-oxidized state and is activated by prolonged hypoxia. Post-translationally, autocatalytically cleaved in response to mitochondrial depolarization both at the N-terminus and C-terminus to generate the short active form (S-OMA1). Autocatalytic processing at the C-terminus takes place at residues 447-456. The S-OMA1 form is unstable. OMA1 pre-processing by AFG3L2 may participate in maturation before OMA1 autocatalytic cleavage. Degraded by YMEL1 in response to membrane depolarization. Protein turnover is regulated by prohibitin (PHB and PHB2), which promotes degradation of OMA1 in a cardiolipin-binding manner. Widely expressed, with strong expression in the heart, skeletal muscle, kidney and liver.

The protein resides in the mitochondrion inner membrane. Protease activity is activated upon autocatalytic cleavage in response to mitochondrial depolarization. Functionally, metalloprotease that is part of the quality control system in the inner membrane of mitochondria. Activated in response to various mitochondrial stress, leading to the proteolytic cleavage of target proteins, such as OPA1, UQCC3 and DELE1. Involved in the fusion of the mitochondrial inner membranes by mediating cleavage of OPA1 at S1 position, generating the soluble OPA1 (S-OPA1), which cooperates with the membrane form (L-OPA1) to coordinate the fusion of mitochondrial inner membranes. Following stress conditions that induce loss of mitochondrial membrane potential, mediates cleavage of OPA1, leading to excess production of soluble OPA1 (S-OPA1) and negative regulation of mitochondrial fusion. Involved in mitochondrial safeguard in response to transient mitochondrial membrane depolarization (flickering) by catalyzing cleavage of OPA1, leading to excess production of S-OPA1, preventing mitochondrial hyperfusion. Also acts as a regulator of apoptosis: upon BAK and BAX aggregation, mediates cleavage of OPA1, leading to the remodeling of mitochondrial cristae and allowing the release of cytochrome c from mitochondrial cristae. In depolarized mitochondria, may also act as a backup protease for PINK1 by mediating PINK1 cleavage and promoting its subsequent degradation by the proteasome. May also cleave UQCC3 in response to mitochondrial depolarization. Also acts as an activator of the integrated stress response (ISR): in response to mitochondrial stress, mediates cleavage of DELE1 to generate the processed form of DELE1 (S-DELE1), which translocates to the cytosol and activates EIF2AK1/HRI to trigger the ISR. Its role in mitochondrial quality control is essential for regulating lipid metabolism as well as to maintain body temperature and energy expenditure under cold-stress conditions. Binds cardiolipin, possibly regulating its protein turnover. Required for the stability of the respiratory supercomplexes. This Homo sapiens (Human) protein is Metalloendopeptidase OMA1, mitochondrial.